The following is a 208-amino-acid chain: Large ribosomal subunit protein uL4 (208 aa).

Residues 49 to 78 are disordered; that stretch reads HKAKTRAEVRGGGKKPFRQKGTGNARQGST. Residues 69–78 are compositionally biased toward polar residues; the sequence is GTGNARQGST.

Belongs to the universal ribosomal protein uL4 family. Part of the 50S ribosomal subunit.

Its function is as follows. One of the primary rRNA binding proteins, this protein initially binds near the 5'-end of the 23S rRNA. It is important during the early stages of 50S assembly. It makes multiple contacts with different domains of the 23S rRNA in the assembled 50S subunit and ribosome. Forms part of the polypeptide exit tunnel. The chain is Large ribosomal subunit protein uL4 from Chlorobaculum tepidum (strain ATCC 49652 / DSM 12025 / NBRC 103806 / TLS) (Chlorobium tepidum).